We begin with the raw amino-acid sequence, 126 residues long: Glycine cleavage system H protein (126 aa).

The 83-residue stretch at 22-104 folds into the Lipoyl-binding domain; that stretch reads VAYVGITDYA…YGKGWLIKIS (83 aa). N6-lipoyllysine is present on Lys63.

This sequence belongs to the GcvH family. The glycine cleavage system is composed of four proteins: P, T, L and H. The cofactor is (R)-lipoate.

Its function is as follows. The glycine cleavage system catalyzes the degradation of glycine. The H protein shuttles the methylamine group of glycine from the P protein to the T protein. The polypeptide is Glycine cleavage system H protein (Parabacteroides distasonis (strain ATCC 8503 / DSM 20701 / CIP 104284 / JCM 5825 / NCTC 11152)).